The chain runs to 99 residues: Cysteine-rich C-terminal protein 1 (99 aa).

Disordered stretches follow at residues Met1 to Ser42 and Arg65 to Cys99. Residues Ala22 to Ala32 show a composition bias toward pro residues. The segment covering Gln83 to Cys99 has biased composition (low complexity).

The chain is Cysteine-rich C-terminal protein 1 (CRCT1) from Homo sapiens (Human).